Here is a 210-residue protein sequence, read N- to C-terminus: DNA-directed RNA polymerases I, II, and III subunit RPABC1 (210 aa).

M1 is modified (N-acetylmethionine). K81 participates in a covalent cross-link: Glycyl lysine isopeptide (Lys-Gly) (interchain with G-Cter in SUMO2).

This sequence belongs to the archaeal Rpo5/eukaryotic RPB5 RNA polymerase subunit family. Component of the RNA polymerase I (Pol I), RNA polymerase II (Pol II) and RNA polymerase III (Pol III) complexes consisting of at least 13, 12 and 17 subunits, respectively. Pol I complex consists of a ten-subunit catalytic core composed of POLR1A/RPA1, POLR1B/RPA2, POLR1C/RPAC1, POLR1D/RPAC2, POLR1H/RPA12, POLR2E/RPABC1, POLR2F/RPABC2, POLR2H/RPABC3, POLR2K/RPABC4 and POLR2L/RPABC5; a mobile stalk subunit POLR1F/RPA43 protruding from the core and additional subunits homologous to general transcription factors POLR1E/RPA49 and POLR1G/RPA34. Part of Pol I pre-initiation complex (PIC), in which Pol I core assembles with RRN3 and promoter-bound UTBF and SL1/TIF-IB complex. Pol II complex contains a ten-subunit catalytic core composed of POLR2A/RPB1, POLR2B/RPB2, POLR2C/RPB3, POLR2I/RPB9, POLR2J/RPB11, POLR2E/RPABC1, POLR2F/RPABC2, POLR2H/RPABC3, POLR2K/RPABC4 and POLR2L/RPABC5 and a mobile stalk composed of two subunits POLR2D/RPB4 and POLR2G/RPB7. Part of Pol II(G) complex, in which Pol II core associates with an additional subunit POLR2M; unlike conventional Pol II, Pol II(G) functions as a transcriptional repressor. Part of TBP-based Pol II pre-initiation complex (PIC), in which Pol II core assembles with general transcription factors and other specific initiation factors including GTF2E1, GTF2E2, GTF2F1, GTF2F2, TCEA1, ERCC2, ERCC3, GTF2H2, GTF2H3, GTF2H4, GTF2H5, GTF2A1, GTF2A2, GTF2B and TBP; this large multi-subunit PIC complex mediates DNA unwinding and targets Pol II core to the transcription start site where the first phosphodiester bond forms. In Pol II complex, this subunit is present in 2-fold molar excess over the other subunits. Pol III complex consists of a ten-subunit catalytic core composed of POLR3A/RPC1, POLR3B/RPC2, POLR1C/RPAC1, POLR1D/RPAC2, POLR3K/RPC10, POLR2E/RPABC1, POLR2F/RPABC2, POLR2H/RPABC3, POLR2K/RPABC4 and POLR2L/RPABC5; a mobile stalk composed of two subunits POLR3H/RPC8 and CRCP/RPC9, protruding from the core and functioning primarily in transcription initiation; and additional subunits homologous to general transcription factors of the RNA polymerase II machinery, POLR3C/RPC3-POLR3F/RPC6-POLR3G/RPC7 heterotrimer required for transcription initiation and POLR3D/RPC4-POLR3E/RPC5 heterodimer involved in both transcription initiation and termination. Component of the PAQosome complex which is responsible for the biogenesis of several protein complexes and which consists of R2TP complex members RUVBL1, RUVBL2, RPAP3 and PIH1D1, URI complex members PFDN2, PFDN6, PDRG1, UXT and URI1 as well as ASDURF, POLR2E and DNAAF10/WDR92. Interacts with URI1.

The protein localises to the nucleus. Its subcellular location is the nucleolus. Its function is as follows. DNA-dependent RNA polymerase catalyzes the transcription of DNA into RNA using the four ribonucleoside triphosphates as substrates. Common component of RNA polymerases I, II and III which synthesize ribosomal RNA precursors, mRNA precursors and many functional non-coding RNAs, and small RNAs, such as 5S rRNA and tRNAs, respectively. Pol II is the central component of the basal RNA polymerase II transcription machinery. Pols are composed of mobile elements that move relative to each other. In Pol II, POLR2E/RPABC1 is part of the lower jaw surrounding the central large cleft and thought to grab the incoming DNA template. Seems to be the major component in this process. This is DNA-directed RNA polymerases I, II, and III subunit RPABC1 from Mus musculus (Mouse).